Here is a 318-residue protein sequence, read N- to C-terminus: tRNA U34 carboxymethyltransferase (318 aa).

Positions 88, 102, 107, 126, 192, 196, and 311 each coordinate carboxy-S-adenosyl-L-methionine.

It belongs to the class I-like SAM-binding methyltransferase superfamily. CmoB family. Homotetramer.

It carries out the reaction carboxy-S-adenosyl-L-methionine + 5-hydroxyuridine(34) in tRNA = 5-carboxymethoxyuridine(34) in tRNA + S-adenosyl-L-homocysteine + H(+). Catalyzes carboxymethyl transfer from carboxy-S-adenosyl-L-methionine (Cx-SAM) to 5-hydroxyuridine (ho5U) to form 5-carboxymethoxyuridine (cmo5U) at position 34 in tRNAs. In Pseudomonas fluorescens (strain Pf0-1), this protein is tRNA U34 carboxymethyltransferase.